We begin with the raw amino-acid sequence, 217 residues long: Small ribosomal subunit protein uS3c (217 aa).

One can recognise a KH type-2 domain in the interval 47–119 (VRTHIKSSSN…KLHIAIEKVA (73 aa)).

Belongs to the universal ribosomal protein uS3 family. In terms of assembly, part of the 30S ribosomal subunit.

The protein resides in the plastid. The protein localises to the chloroplast. In Pinus thunbergii (Japanese black pine), this protein is Small ribosomal subunit protein uS3c (rps3).